The primary structure comprises 704 residues: Polyribonucleotide nucleotidyltransferase (704 aa).

Mg(2+)-binding residues include Asp-488 and Asp-494. Positions 555–614 constitute a KH domain; it reads PRITTIKINPEKIRDVIGKGGATIRALTEETGTTIELDDDGTVKIASSNGEATKEAIRRI. Positions 624–692 constitute an S1 motif domain; it reads GTVYNGKVVR…RQGRVRLSMK (69 aa).

It belongs to the polyribonucleotide nucleotidyltransferase family. As to quaternary structure, component of the RNA degradosome, which is a multiprotein complex involved in RNA processing and mRNA degradation. It depends on Mg(2+) as a cofactor.

It is found in the cytoplasm. The catalysed reaction is RNA(n+1) + phosphate = RNA(n) + a ribonucleoside 5'-diphosphate. Its function is as follows. Involved in mRNA degradation. Catalyzes the phosphorolysis of single-stranded polyribonucleotides processively in the 3'- to 5'-direction. The sequence is that of Polyribonucleotide nucleotidyltransferase from Shewanella pealeana (strain ATCC 700345 / ANG-SQ1).